A 543-amino-acid chain; its full sequence is Excitatory amino acid transporter 1 (543 aa).

The Cytoplasmic portion of the chain corresponds to 1 to 47; sequence MTKSNGEDPRAGSRMERFQQGVRQRTLLAKKKVQNITKDDVKGFLKR. A helical transmembrane segment spans residues 48 to 68; that stretch reads NGFVLFTVIAVVVGSILGFSV. Over 69 to 86 the chain is Extracellular; the sequence is RSYHMTFRELKYFSFPGE. Residues 87 to 108 form a helical membrane-spanning segment; sequence LLMRMLQMLVLPLIVSSLVTGM. Residues 109 to 122 lie on the Cytoplasmic side of the membrane; that stretch reads AALDSKASGKMGLR. A helical membrane pass occupies residues 123-145; the sequence is AVVYYMTTTVIAVFIGIVIVIIV. Residues 146 to 237 are Extracellular-facing; it reads HPGKGTKEHM…MREEMIPVPG (92 aa). N-linked (GlcNAc...) asparagine glycans are attached at residues Asn-206 and Asn-217. Residues 238 to 261 traverse the membrane as a helical segment; sequence AVNGVNALGLVVFSMCFGLVIGNM. The Cytoplasmic portion of the chain corresponds to 262–270; sequence KEQGKALKD. Residues 271 to 298 form a helical membrane-spanning segment; the sequence is FFDSLNEAIMRLVAVIMWYAPIGILFLI. At 299-319 the chain is on the extracellular side; that stretch reads AGKIAEMEDMGVVGGQLGMYT. The helical transmembrane segment at 320–341 threads the bilayer; sequence VTVIIGLLIHAVIVLPLLYFAV. Topologically, residues 342–346 are cytoplasmic; it reads TRKNP. The discontinuously helical intramembrane region spans 347–377; the sequence is WVFIGGILQALITALGTSSSSATLPITFKCL. 364 to 366 is a binding site for L-aspartate; the sequence is SSS. At 378–386 the chain is on the cytoplasmic side; sequence EENNKVDKR. Residues 387–413 form a helical membrane-spanning segment; sequence VTRFVLPVGATINMDGTALYEALAAIF. Na(+)-binding residues include Gly-395, Thr-397, and Asn-399. Thr-403 is a binding site for L-aspartate. Residues 414–426 lie on the Extracellular side of the membrane; that stretch reads IAQVNNYDLNFGQ. Residues 427–460 constitute an intramembrane region (discontinuously helical); that stretch reads ILTISITATAASIGAAGIPQAGLVTMVIVLTSVG. 444-448 contacts L-aspartate; sequence IPQAG. Topologically, residues 461–473 are extracellular; that stretch reads LPTDDITLIIAVD. A helical transmembrane segment spans residues 474–495; that stretch reads WFLDRLRTTTNVLGDSLGAGIV. The L-aspartate site is built by Asp-477 and Asn-484. The Na(+) site is built by Asn-484 and Asp-488. The Cytoplasmic segment spans residues 496-543; the sequence is EHLSRHELQSGDAEMGNSVIEENEMKKPYQLVSQENELEKPIDSETKM. The segment at 521–543 is disordered; sequence KKPYQLVSQENELEKPIDSETKM. The span at 532–543 shows a compositional bias: basic and acidic residues; sequence ELEKPIDSETKM.

This sequence belongs to the dicarboxylate/amino acid:cation symporter (DAACS) (TC 2.A.23) family. In terms of assembly, homotrimer. In terms of tissue distribution, detected in retina (at protein level).

It localises to the cell membrane. It carries out the reaction K(+)(in) + L-glutamate(out) + 3 Na(+)(out) + H(+)(out) = K(+)(out) + L-glutamate(in) + 3 Na(+)(in) + H(+)(in). The enzyme catalyses K(+)(in) + L-aspartate(out) + 3 Na(+)(out) + H(+)(out) = K(+)(out) + L-aspartate(in) + 3 Na(+)(in) + H(+)(in). It catalyses the reaction D-aspartate(out) + K(+)(in) + 3 Na(+)(out) + H(+)(out) = D-aspartate(in) + K(+)(out) + 3 Na(+)(in) + H(+)(in). Sodium-dependent, high-affinity amino acid transporter that mediates the uptake of L-glutamate and also L-aspartate and D-aspartate. Functions as a symporter that transports one amino acid molecule together with two or three Na(+) ions and one proton, in parallel with the counter-transport of one K(+) ion. Plays a redundant role in the rapid removal of released glutamate from the synaptic cleft, which is essential for terminating the postsynaptic action of glutamate. The protein is Excitatory amino acid transporter 1 (SLC1A3) of Ambystoma tigrinum (Eastern tiger salamander).